Consider the following 239-residue polypeptide: 1-(5-phosphoribosyl)-5-[(5-phosphoribosylamino)methylideneamino] imidazole-4-carboxamide isomerase (239 aa).

D8 acts as the Proton acceptor in catalysis. Residue D129 is the Proton donor of the active site.

Belongs to the HisA/HisF family.

Its subcellular location is the cytoplasm. The enzyme catalyses 1-(5-phospho-beta-D-ribosyl)-5-[(5-phospho-beta-D-ribosylamino)methylideneamino]imidazole-4-carboxamide = 5-[(5-phospho-1-deoxy-D-ribulos-1-ylimino)methylamino]-1-(5-phospho-beta-D-ribosyl)imidazole-4-carboxamide. The protein operates within amino-acid biosynthesis; L-histidine biosynthesis; L-histidine from 5-phospho-alpha-D-ribose 1-diphosphate: step 4/9. The sequence is that of 1-(5-phosphoribosyl)-5-[(5-phosphoribosylamino)methylideneamino] imidazole-4-carboxamide isomerase from Legionella pneumophila (strain Lens).